Consider the following 409-residue polypeptide: NADH-quinone oxidoreductase subunit D (409 aa).

The protein belongs to the complex I 49 kDa subunit family. NDH-1 is composed of 14 different subunits. Subunits NuoB, C, D, E, F, and G constitute the peripheral sector of the complex.

The protein localises to the cell inner membrane. It carries out the reaction a quinone + NADH + 5 H(+)(in) = a quinol + NAD(+) + 4 H(+)(out). Functionally, NDH-1 shuttles electrons from NADH, via FMN and iron-sulfur (Fe-S) centers, to quinones in the respiratory chain. The immediate electron acceptor for the enzyme in this species is believed to be ubiquinone. Couples the redox reaction to proton translocation (for every two electrons transferred, four hydrogen ions are translocated across the cytoplasmic membrane), and thus conserves the redox energy in a proton gradient. This chain is NADH-quinone oxidoreductase subunit D, found in Campylobacter curvus (strain 525.92).